A 137-amino-acid chain; its full sequence is MIWKRHLTLDELNATSDNTMVAHLGIVYTRLGDDVLEAEMPVDIRTHQPFGLLHGGASAALAETLGSMAGFMMTRDGQCVVGTELNATHHRPVSEGKVRGVCQPLHLGRQNQSWEIVVFDEQGRRCCTCRLGTAVLG.

Catalysis depends on Glu63, which acts as the Nucleophile or proton acceptor.

The protein belongs to the thioesterase PaaI family. In terms of assembly, homotetramer. Dimer of dimers. Interacts specifically with the aryl carrier protein (ArCP) domain of EntB.

It is found in the cytoplasm. It functions in the pathway siderophore biosynthesis; enterobactin biosynthesis. In terms of biological role, required for optimal enterobactin synthesis. Acts as a proofreading enzyme that prevents EntB misacylation by hydrolyzing the thioester bound existing between EntB and wrongly charged molecules. This chain is Proofreading thioesterase EntH, found in Escherichia coli O157:H7 (strain EC4115 / EHEC).